The primary structure comprises 252 residues: Metalloprotease LoiP (252 aa).

Positions M1–G18 are cleaved as a signal peptide. C19 carries the N-palmitoyl cysteine lipid modification. The S-diacylglycerol cysteine moiety is linked to residue C19. C53 and C108 are oxidised to a cystine. H130 is a Zn(2+) binding site. E131 is an active-site residue. 2 residues coordinate Zn(2+): H134 and E189. The interval R224–K252 is disordered.

It belongs to the peptidase M48B family. Interacts with Era and BepA. The cofactor is Zn(2+). In terms of processing, the intramolecular disulfide bond improves the stability and the activity of LoiP. It forms even in the absence of the oxido-reductase DsbA.

It is found in the cell outer membrane. In terms of biological role, metalloprotease that cleaves substrates preferentially between Phe-Phe residues. Plays a role in response to some stress conditions. Seems to regulate the expression of speB. The protein is Metalloprotease LoiP (loiP) of Escherichia coli (strain K12).